The chain runs to 267 residues: 5'-nucleotidase SurE (267 aa).

4 residues coordinate a divalent metal cation: Asp9, Asp10, Ser40, and Asn97.

Belongs to the SurE nucleotidase family. The cofactor is a divalent metal cation.

Its subcellular location is the cytoplasm. It carries out the reaction a ribonucleoside 5'-phosphate + H2O = a ribonucleoside + phosphate. Nucleotidase that shows phosphatase activity on nucleoside 5'-monophosphates. The protein is 5'-nucleotidase SurE of Helicobacter pylori (strain HPAG1).